The chain runs to 379 residues: tRNA-specific 2-thiouridylase MnmA (379 aa).

ATP-binding positions include 23–30 (AMSGGVDS) and leucine 49. The Nucleophile role is filled by cysteine 117. The cysteines at positions 117 and 214 are disulfide-linked. Residue glycine 141 coordinates ATP. An interaction with tRNA region spans residues 163-165 (RDQ). Catalysis depends on cysteine 214, which acts as the Cysteine persulfide intermediate.

This sequence belongs to the MnmA/TRMU family.

It is found in the cytoplasm. It catalyses the reaction S-sulfanyl-L-cysteinyl-[protein] + uridine(34) in tRNA + AH2 + ATP = 2-thiouridine(34) in tRNA + L-cysteinyl-[protein] + A + AMP + diphosphate + H(+). Functionally, catalyzes the 2-thiolation of uridine at the wobble position (U34) of tRNA, leading to the formation of s(2)U34. The sequence is that of tRNA-specific 2-thiouridylase MnmA from Cereibacter sphaeroides (strain ATCC 17023 / DSM 158 / JCM 6121 / CCUG 31486 / LMG 2827 / NBRC 12203 / NCIMB 8253 / ATH 2.4.1.) (Rhodobacter sphaeroides).